We begin with the raw amino-acid sequence, 174 residues long: Adenylate kinase (174 aa).

Positions 12–41 are NMP; the sequence is STGDMLRAAIKAGTPLGLEAKKIIDEGGLV. AMP contacts are provided by residues T13, R18, 39-41, 67-70, and Q74; these read GLV and GFPR. The tract at residues 104-141 is LID; that stretch reads GRRVHLASGRTYHVTYNPPKVEGKDDVTGEDLIQRDDD. Residues R105 and 114–115 contribute to the ATP site; that span reads TY. AMP is bound by residues R138 and R149.

Belongs to the adenylate kinase family. In terms of assembly, monomer.

It is found in the cytoplasm. The enzyme catalyses AMP + ATP = 2 ADP. It participates in purine metabolism; AMP biosynthesis via salvage pathway; AMP from ADP: step 1/1. In terms of biological role, catalyzes the reversible transfer of the terminal phosphate group between ATP and AMP. Plays an important role in cellular energy homeostasis and in adenine nucleotide metabolism. This Neisseria lactamica protein is Adenylate kinase.